Here is a 98-residue protein sequence, read N- to C-terminus: uncharacterized protein (98 aa).

The N-terminal stretch at 1–23 (MKKMQSIVLALSLVLVAPMAAQA) is a signal peptide. The interval 68–98 (WHLHGPPPPPRHHKKAPHDHHGGHGPGKHHR) is disordered. Residues 77 to 98 (PRHHKKAPHDHHGGHGPGKHHR) show a composition bias toward basic residues.

This sequence to E.coli YpeC.

This is an uncharacterized protein from Escherichia coli (strain K12).